We begin with the raw amino-acid sequence, 362 residues long: Ferredoxin--NADP reductase 1 (362 aa).

FAD contacts are provided by D47, Q55, Y60, A100, F141, D309, and S350.

It belongs to the ferredoxin--NADP reductase type 2 family. In terms of assembly, homodimer. FAD serves as cofactor.

It carries out the reaction 2 reduced [2Fe-2S]-[ferredoxin] + NADP(+) + H(+) = 2 oxidized [2Fe-2S]-[ferredoxin] + NADPH. The polypeptide is Ferredoxin--NADP reductase 1 (Cupriavidus pinatubonensis (strain JMP 134 / LMG 1197) (Cupriavidus necator (strain JMP 134))).